Here is a 274-residue protein sequence, read N- to C-terminus: Putative 2-succinyl-6-hydroxy-2,4-cyclohexadiene-1-carboxylate synthase (274 aa).

The region spanning 26 to 259 is the AB hydrolase-1 domain; the sequence is AVVCLHGFTG…KAGHTVHVEQ (234 aa).

It belongs to the AB hydrolase superfamily. MenH family. As to quaternary structure, monomer.

The catalysed reaction is 5-enolpyruvoyl-6-hydroxy-2-succinyl-cyclohex-3-ene-1-carboxylate = (1R,6R)-6-hydroxy-2-succinyl-cyclohexa-2,4-diene-1-carboxylate + pyruvate. It functions in the pathway quinol/quinone metabolism; 1,4-dihydroxy-2-naphthoate biosynthesis; 1,4-dihydroxy-2-naphthoate from chorismate: step 3/7. The protein operates within quinol/quinone metabolism; menaquinone biosynthesis. In terms of biological role, catalyzes a proton abstraction reaction that results in 2,5-elimination of pyruvate from 2-succinyl-5-enolpyruvyl-6-hydroxy-3-cyclohexene-1-carboxylate (SEPHCHC) and the formation of 2-succinyl-6-hydroxy-2,4-cyclohexadiene-1-carboxylate (SHCHC). The polypeptide is Putative 2-succinyl-6-hydroxy-2,4-cyclohexadiene-1-carboxylate synthase (Bacillus subtilis (strain 168)).